The sequence spans 2055 residues: MLKFKYGVRNPSEASAPEPIASRASRLNLFFQGKPPLMTQQQMSALSREGVLDALFVLLEECSQPALMKIKHVSSFVRKYSDTIAELRELQPSVRDFEVRSLVGCGHFAEVQVVREKATGDVYAMKIMKKAALRAQEQVSFFEEERNILSQSTSPWIPQLQYAFQDKNNLYLVMEYQPGGDLLSLLNRYEDQLDENMIQFYLAELILAVHSVHQMGYVHRDIKPENILIDRTGHIKLVDFGSAAKMNSNKVDAKLPIGTPDYMAPEVLTVMNEDRRGTYGLDCDWWSVGVVAYEMLYGKTPFTEGTSARTFNNIMNFQRFLKFPDDPKVSSELLDLIQSLLCVQKERLKFEGLCCHPFFARTDWNNIRNSPPPFVPTLKSDDDTSNFDEPEKNSWVSSSPCQLSPSGFSGEELPFVGFSYSKALGYLGRSESVVSGLDSPAKISSMEKKLLIKSKELQDSQDKCHKMEQEMARLHRRVSEVEAVLSQKEVELKASETQRSLLEQDLATYITECSSLKRSLEQARMEVSQEDDKALQLLHDIREQSRKLQEIKEQEYQAQVEEMRLMMNQLEEDLVSARRRSDLYESELRESRLAAEEFKRKANECQHKLMKAKDLGKPEVGECSRLEKINAEQQLKIQELQEKLEKAVKASTEATELLQNIRQAKERAERELEKLHNREDSSEGIKKKLVEAEERRHSLENKVKRLETMERRENRLKDDIQTKSEQIQQMADKILELEEKHREAQVSAQHLEVHLKQKEQHYEEKIKVLDNQIKKDLADKESLETMMQRHEEEAHEKGKILSEQKAMINAMDSKIRSLEQRIVELSEANKLAANSSLFTQRNMKAQEEMISELRQQKFYLETQAGKLEAQNRKLEEQLEKISHQDHSDKNRLLELETRLREVSLEHEEQKLELKRQLTELQLSLQERESQLTALQAARAALESQLRQAKTELEETTAEAEEEIQALTAHRDEIQRKFDALRNSCTVITDLEEQLNQLTEDNAELNNQNFYLSKQLDEASGANDEIVQLRSEVDHLRREITEREMQLTSQKQTMEALKTTCTMLEEQVMDLEALNDELLEKERQWEAWRSVLGDEKSQFECRVRELQRMLDTEKQSRARADQRITESRQVVELAVKEHKAEILALQQALKEQKLKAESLSDKLNDLEKKHAMLEMNARSLQQKLETERELKQRLLEEQAKLQQQMDLQKNHIFRLTQGLQEALDRADLLKTERSDLEYQLENIQVLYSHEKVKMEGTISQQTKLIDFLQAKMDQPAKKKKVPLQYNELKLALEKEKARCAELEEALQKTRIELRSAREEAAHRKATDHPHPSTPATARQQIAMSAIVRSPEHQPSAMSLLAPPSSRRKEASTPEEFSRRLKERMHHNIPHRFNVGLNMRATKCAVCLDTVHFGRQASKCLECQVMCHPKCSTCLPATCGLPAEYATHFTEAFCRDKVSSPGLQSKEPSSSLHLEGWMKVPRNNKRGQQGWDRKYIVLEGSKVLIYDNEAREAGQRPVEEFELCLPDGDVSIHGAVGASELANTAKADVPYILKMESHPHTTCWPGRTLYLLAPSFPDKQRWVTALESVVAGGRVSREKAEADAKLLGNSLLKLEGDDRLDMNCTLPFSDQVVLVGTEEGLYALNVLKNSLTHIPGIGAVFQIYIIKDLEKLLMIAGEERALCLVDVKKVKQSLAQSHLPAQPDVSPNIFEAVKGCHLFAAGKIENSLCICAAMPSKVVILRYNDNLSKFCIRKEIETSEPCSCIHFTNYSILIGTNKFYEIDMKQYTLEEFLDKNDHSLAPAVFASSTNSFPVSIVQANSTGQREEYLLCFHEFGVFVDSYGRRSRTDDLKWSRLPLAFAYREPYLFVTHFNSLEVIEIQARSSLGTPARAYLEIPNPRYLGPAISSGAIYLASSYQDKLRVICCKGNLVKESGTEQHRVPSTSRSSPNKRGPPTYNEHITKRVASSPAPPEGPSHPREPSTPHRYRDREGRTELRRDKSPGRPLEREKSPGRMLSTRRERSPGRLFEDSSRGRLPAGAVRTPLSQVNKVWDQSSV.

Residues 97–359 enclose the Protein kinase domain; sequence FEVRSLVGCG…FEGLCCHPFF (263 aa). Residues 103 to 111 and Lys-126 each bind ATP; that span reads VGCGHFAEV. Asp-221 (proton acceptor) is an active-site residue. The AGC-kinase C-terminal domain maps to 360–430; sequence ARTDWNNIRN…SKALGYLGRS (71 aa). Residues 375–398 form a disordered region; the sequence is VPTLKSDDDTSNFDEPEKNSWVSS. 3 coiled-coil regions span residues 457–747, 773–1238, and 1284–1318; these read LQDS…AQVS, IKKD…LEYQ, and YNEL…AREE. Positions 1349 to 1376 are disordered; the sequence is PEHQPSAMSLLAPPSSRRKEASTPEEFS. A compositionally biased stretch (low complexity) spans 1353–1363; that stretch reads PSAMSLLAPPS. Basic and acidic residues predominate over residues 1365-1376; it reads RRKEASTPEEFS. Residues 1388–1437 form a Phorbol-ester/DAG-type zinc finger; sequence PHRFNVGLNMRATKCAVCLDTVHFGRQASKCLECQVMCHPKCSTCLPATC. Residues 1469 to 1589 form the PH domain; sequence SLHLEGWMKV…WVTALESVVA (121 aa). One can recognise a CNH domain in the interval 1617 to 1907; the sequence is RLDMNCTLPF…RYLGPAISSG (291 aa). Residues 1932–2040 form a disordered region; sequence SGTEQHRVPS…RGRLPAGAVR (109 aa). Residues 1939 to 1948 are compositionally biased toward polar residues; the sequence is VPSTSRSSPN. A compositionally biased stretch (basic and acidic residues) spans 1974–2031; that stretch reads SHPREPSTPHRYRDREGRTELRRDKSPGRPLEREKSPGRMLSTRRERSPGRLFEDSSR.

The protein belongs to the protein kinase superfamily. AGC Ser/Thr protein kinase family. As to quaternary structure, homodimer. Directly interacts with KIF14 depending on the activation state (stronger interaction with the kinase-dead form). Interacts with TTC3.

It is found in the cytoplasm. It catalyses the reaction L-seryl-[protein] + ATP = O-phospho-L-seryl-[protein] + ADP + H(+). The catalysed reaction is L-threonyl-[protein] + ATP = O-phospho-L-threonyl-[protein] + ADP + H(+). Functionally, plays a role in cytokinesis. Required for KIF14 localization to the central spindle and midbody. Putative RHO/RAC effector that binds to the GTP-bound forms of RHO and RAC1. It probably binds p21 with a tighter specificity in vivo. Displays serine/threonine protein kinase activity. Plays an important role in the regulation of cytokinesis and the development of the central nervous system. Phosphorylates MYL9/MLC2. This chain is Citron rho-interacting kinase, found in Rattus norvegicus (Rat).